Reading from the N-terminus, the 540-residue chain is Cystathionine gamma-synthase 1, chloroplastic (540 aa).

The transit peptide at 1-78 (MAVSSCARAF…RNCSNIGVAQ (78 aa)) directs the protein to the chloroplast. Pyridoxal 5'-phosphate is bound by residues Tyr-203, Arg-205, Gly-233, Met-234, Tyr-258, Ser-353, and Thr-355. Lys-356 is subject to N6-(pyridoxal phosphate)lysine.

This sequence belongs to the trans-sulfuration enzymes family. Forms homotetramers composed of 2 homodimers. Requires pyridoxal 5'-phosphate as cofactor.

It localises to the plastid. Its subcellular location is the chloroplast. The enzyme catalyses O-phospho-L-homoserine + L-cysteine = L,L-cystathionine + phosphate. It carries out the reaction O-succinyl-L-homoserine + L-cysteine = L,L-cystathionine + succinate + H(+). It functions in the pathway amino-acid biosynthesis; L-methionine biosynthesis via de novo pathway; L-cystathionine from O-succinyl-L-homoserine: step 1/1. With respect to regulation, irreversibly inactivated by DL-propargylglycine. Functionally, catalyzes the first committed step of methionine (Met) biosynthesis. Catalyzes the formation of L-cystathionine from homoserine esters and L-cysteine, via a gamma-replacement reaction. The sequence is that of Cystathionine gamma-synthase 1, chloroplastic from Nicotiana tabacum (Common tobacco).